Here is a 136-residue protein sequence, read N- to C-terminus: Large ribosomal subunit protein uL16 (136 aa).

This sequence belongs to the universal ribosomal protein uL16 family. As to quaternary structure, part of the 50S ribosomal subunit.

Functionally, binds 23S rRNA and is also seen to make contacts with the A and possibly P site tRNAs. In Mannheimia succiniciproducens (strain KCTC 0769BP / MBEL55E), this protein is Large ribosomal subunit protein uL16.